A 212-amino-acid polypeptide reads, in one-letter code: WAP four-disulfide core domain protein 1 (212 aa).

An N-terminal signal peptide occupies residues 1 to 26 (MGSCDRKALWALSFLLLLLGSSSVQG). Positions 43-62 (EEVAATGSRQPHADRCPPPP) are disordered. The 50-residue stretch at 51 to 100 (RQPHADRCPPPPRTLPPGACQATRCQSDSECPRHRRCCYNGCAYACLEAV) folds into the WAP domain. Cystine bridges form between cysteine 58/cysteine 88, cysteine 70/cysteine 92, cysteine 75/cysteine 87, and cysteine 81/cysteine 96. Residues 191–212 (EYPEGDSKYVAEPGKGQQRHFP) form a disordered region.

Vascular smooth muscle and prostate. Periacinar ring.

The protein resides in the secreted. Has growth inhibitory activity. In Rattus norvegicus (Rat), this protein is WAP four-disulfide core domain protein 1 (Wfdc1).